The primary structure comprises 521 residues: MQKISDTLKLIITAGVSIALAIVAFFLGYLYRKKIAEKTIKSAEQEAQRIVEEAKKQAEAYKKEATLLAKEEIHRARSEFDREVRERRAELQRFERRLIQKEEMLDKKMAAVEEKEEQLNQKIKDVQKLQEEIELLKQKQQEELQRISGLTQEEARQIILKSVEQDVKHDVALMIKELEQQAKEEADKKAREIIALAIQRYSSDYVAENTVSVVTLPNDEMKGRIIGREGRNIKTFETVTGIDLIIDDTPEAVILSGFDPIRREIAKLTLEKLILDGRIHPARIEEMYEKAKREVENKIREEGERVVFELGIHNLHPELIKLIGKLRYRTSYGQNVLAHSIEVANIAGIMAAELGLDQSIAKRAGLLHDIGKAVDHEVEGSHALIGYDLAKRYKETNPDVLEAIGGHHGEMETRSIYNVLIQAADSVSAARPGARRESLESYIKRLQKLEEIANSFDGVEKAYAIQAGREIRIMVKPDHVSDDDIVIMAREIVKRIESELDYPGQIKVNVIREVRAVEYAK.

Residues 10–30 (LIITAGVSIALAIVAFFLGYL) form a helical membrane-spanning segment. The KH domain occupies 210–270 (TVSVVTLPND…IRREIAKLTL (61 aa)). An HD domain is found at 336-430 (VLAHSIEVAN…IQAADSVSAA (95 aa)).

This sequence belongs to the RNase Y family.

It localises to the cell membrane. Its function is as follows. Endoribonuclease that initiates mRNA decay. This Caldicellulosiruptor saccharolyticus (strain ATCC 43494 / DSM 8903 / Tp8T 6331) protein is Ribonuclease Y.